The chain runs to 257 residues: Pyridoxine 5'-phosphate synthase (257 aa).

Asparagine 6 is a binding site for 3-amino-2-oxopropyl phosphate. 8–9 (DH) serves as a coordination point for 1-deoxy-D-xylulose 5-phosphate. A 3-amino-2-oxopropyl phosphate-binding site is contributed by arginine 17. Histidine 41 acts as the Proton acceptor in catalysis. Arginine 43 and histidine 48 together coordinate 1-deoxy-D-xylulose 5-phosphate. Glutamate 68 serves as the catalytic Proton acceptor. Threonine 98 lines the 1-deoxy-D-xylulose 5-phosphate pocket. Histidine 210 serves as the catalytic Proton donor. Residues glycine 211 and 232–233 (GQ) contribute to the 3-amino-2-oxopropyl phosphate site.

Belongs to the PNP synthase family. As to quaternary structure, homooctamer; tetramer of dimers.

It localises to the cytoplasm. It catalyses the reaction 3-amino-2-oxopropyl phosphate + 1-deoxy-D-xylulose 5-phosphate = pyridoxine 5'-phosphate + phosphate + 2 H2O + H(+). It participates in cofactor biosynthesis; pyridoxine 5'-phosphate biosynthesis; pyridoxine 5'-phosphate from D-erythrose 4-phosphate: step 5/5. Catalyzes the complicated ring closure reaction between the two acyclic compounds 1-deoxy-D-xylulose-5-phosphate (DXP) and 3-amino-2-oxopropyl phosphate (1-amino-acetone-3-phosphate or AAP) to form pyridoxine 5'-phosphate (PNP) and inorganic phosphate. The chain is Pyridoxine 5'-phosphate synthase from Campylobacter jejuni subsp. jejuni serotype O:2 (strain ATCC 700819 / NCTC 11168).